Here is a 299-residue protein sequence, read N- to C-terminus: Troponin T, cardiac muscle (299 aa).

Over residues 1–71 the composition is skewed to acidic residues; sequence MSDAEEEVVE…EARDAEDGPV (71 aa). 2 disordered regions span residues 1–97 and 137–220; these read MSDA…GERV and DRIE…EKKK. The residue at position 2 (S2) is an N-acetylserine. The residue at position 2 (S2) is a Phosphoserine. 2 stretches are compositionally biased toward basic and acidic residues: residues 137-185 and 204-220; these read DRIE…DEAR and QTER…EKKK. T205 carries the phosphothreonine; by PKC/PRKCA modification. The residue at position 209 (S209) is a Phosphoserine; by PKC/PRKCA. Position 214 is a phosphothreonine; by PKC/PRKCA and RAF1 (T214). At T295 the chain carries Phosphothreonine; by PKC/PRKCA.

Belongs to the troponin T family. Post-translationally, phosphorylation at Thr-214 by PRKCA induces significant reduction in myofilament calcium sensitivity and actomyosin ATPase activity.

Its function is as follows. Troponin T is the tropomyosin-binding subunit of troponin, the thin filament regulatory complex which confers calcium-sensitivity to striated muscle actomyosin ATPase activity. In Rattus norvegicus (Rat), this protein is Troponin T, cardiac muscle (Tnnt2).